Here is a 468-residue protein sequence, read N- to C-terminus: ATP synthase subunit beta (468 aa).

155–162 is an ATP binding site; that stretch reads GGAGVGKT.

Belongs to the ATPase alpha/beta chains family. In terms of assembly, F-type ATPases have 2 components, CF(1) - the catalytic core - and CF(0) - the membrane proton channel. CF(1) has five subunits: alpha(3), beta(3), gamma(1), delta(1), epsilon(1). CF(0) has three main subunits: a(1), b(2) and c(9-12). The alpha and beta chains form an alternating ring which encloses part of the gamma chain. CF(1) is attached to CF(0) by a central stalk formed by the gamma and epsilon chains, while a peripheral stalk is formed by the delta and b chains.

The protein localises to the cell membrane. The enzyme catalyses ATP + H2O + 4 H(+)(in) = ADP + phosphate + 5 H(+)(out). Produces ATP from ADP in the presence of a proton gradient across the membrane. The catalytic sites are hosted primarily by the beta subunits. This is ATP synthase subunit beta from Enterococcus hirae (strain ATCC 9790 / DSM 20160 / JCM 8729 / LMG 6399 / NBRC 3181 / NCIMB 6459 / NCDO 1258 / NCTC 12367 / WDCM 00089 / R).